The following is an 886-amino-acid chain: 3',5'-cyclic-AMP phosphodiesterase 4A (886 aa).

Residues 1-128 form a disordered region; it reads MEPPTVPSER…GRSPLDSQAS (128 aa). S13 carries the phosphoserine modification. A compositionally biased stretch (low complexity) spans 36-46; sequence QPRTPIRIQQR. Basic and acidic residues predominate over residues 51–78; the sequence is SAERAERERQPHRPIERADAMDTSDRPG. The segment covering 93 to 104 has biased composition (gly residues); the sequence is TGTGSGGAGGGS. Residues G119 and L123 each carry the phosphoserine modification. S152 is modified (phosphoserine; by MAPKAPK2). S157, S165, and S209 each carry phosphoserine. The interval 294–331 is disordered; that stretch reads KQNEVEIPSPTMKEREKQQAPRPRPSQPPPPPVPHLQP. Pro residues predominate over residues 315 to 328; sequence RPRPSQPPPPPVPH. S346 carries the post-translational modification Phosphoserine. The PDEase domain occupies 357-686; that stretch reads VKTDQEELLA…DWYYSAIRQS (330 aa). A Glycyl lysine isopeptide (Lys-Gly) (interchain with G-Cter in SUMO) cross-link involves residue K358. Catalysis depends on H433, which acts as the Proton donor. H433 is a binding site for 3',5'-cyclic AMP. H433 and H437 together coordinate AMP. Zn(2+)-binding residues include H437, H473, D474, and D591. D474, D591, Q642, and F645 together coordinate AMP. D474 serves as a coordination point for Mg(2+). D474 provides a ligand contact to Mn(2+). Q642 and F645 together coordinate 3',5'-cyclic AMP. 2 disordered regions span residues 682-705 and 866-886; these read AIRQSPSPPPEEESRGPGHPPLPD and FGEDTSALPAPGGGGSGGDPT. Phosphoserine occurs at positions 686 and 688. The segment covering 876–886 has biased composition (gly residues); the sequence is PGGGGSGGDPT.

The protein belongs to the cyclic nucleotide phosphodiesterase family. PDE4 subfamily. Interacts with LYN (via SH3 domain). Interacts with ARRB2. Requires Zn(2+) as cofactor. Mg(2+) serves as cofactor. The cofactor is Mn(2+). In terms of processing, proteolytically cleaved by CASP3. Phosphorylated at Ser-119 by PKA. Expressed in lymphoid cell subsets including CD8-positive T cells and T-helper 2 cells. Expressed in dendritic cells. In terms of tissue distribution, highly expressed in liver, stomach, testis, thyroid and adrenal glands and at a lower extent in placenta, kidney, pancreas, ovary, uterus and skin. Expressed in myeloid cell subsets including dendritic cells, monocytes, macrophages, eosinophils and mast cells. Expressed in natural killer cells. Expressed in bronchial smooth muscle. As to expression, expressed at high levels in the heart and small intestine. It is also found in the brain, kidney, spleen, colon, salivary gland, ovary and peripheral blood lymphocytes. Expressed predominantly in skeletal muscle and brain and at lower levels in the testis. Found in specific neuronal subpopulations including cortical pyramidal neurons, horn neurons in the spinal cord and Purkinje cells in cerebellum (at protein level).

It localises to the cytoplasm. It is found in the perinuclear region. The protein localises to the cell projection. The protein resides in the ruffle membrane. Its subcellular location is the cytosol. It localises to the membrane. The catalysed reaction is 3',5'-cyclic AMP + H2O = AMP + H(+). It functions in the pathway purine metabolism; 3',5'-cyclic AMP degradation; AMP from 3',5'-cyclic AMP: step 1/1. With respect to regulation, inhibited by rolipram, cilomilast, Ro 20-1724, roflumilast and denbufylline. Inhibited by rolipram. Its activity is regulated as follows. Inhibited by rolipram and cilomilast. Functionally, hydrolyzes the second messenger 3',5'-cyclic AMP (cAMP), which is a key regulator of many important physiological processes. Efficiently hydrolyzes cAMP. Its function is as follows. Efficiently hydrolyzes cAMP. The phosphodiesterase activity is not affected by calcium, calmodulin or cyclic GMP (cGMP) levels. Does not hydrolyze cGMP. The sequence is that of 3',5'-cyclic-AMP phosphodiesterase 4A (PDE4A) from Homo sapiens (Human).